Consider the following 985-residue polypeptide: Alpha-glucosidase (985 aa).

A signal peptide spans 1–25 (MAGLKSFLASSWLLPVACGASQSIV). N-linked (GlcNAc...) asparagine glycosylation is found at Asn-126, Asn-145, Asn-220, Asn-255, Asn-349, and Asn-424. Residue Asp-492 is the Nucleophile of the active site. Glu-495 is an active-site residue. 5 N-linked (GlcNAc...) asparagine glycosylation sites follow: Asn-508, Asn-536, Asn-539, Asn-602, and Asn-624. Asp-660 (proton donor) is an active-site residue. Asn-661, Asn-835, Asn-881, Asn-929, and Asn-957 each carry an N-linked (GlcNAc...) asparagine glycan.

Belongs to the glycosyl hydrolase 31 family.

The enzyme catalyses Hydrolysis of terminal, non-reducing (1-&gt;4)-linked alpha-D-glucose residues with release of alpha-D-glucose.. Hydrolyzes malto-oligosaccharides, but has a low activity toward soluble starch. The polypeptide is Alpha-glucosidase (agdA) (Aspergillus oryzae (strain ATCC 42149 / RIB 40) (Yellow koji mold)).